Consider the following 372-residue polypeptide: NAD(P)H-quinone oxidoreductase subunit 1 (372 aa).

The next 9 helical transmembrane spans lie at 27 to 47 (LLWL…GVLV), 65 to 85 (PEYI…KLIF), 97 to 117 (WLFT…YIIV), 128 to 148 (LAMG…GLLM), 176 to 196 (LALA…VEIV), 204 to 224 (ILSW…IAAL), 254 to 274 (FALF…LVSV), 308 to 328 (VLGI…AILL), and 347 to 367 (FLLP…LAFP).

It belongs to the complex I subunit 1 family. In terms of assembly, NDH-1 is composed of at least 11 different subunits.

It localises to the cellular thylakoid membrane. The enzyme catalyses a plastoquinone + NADH + (n+1) H(+)(in) = a plastoquinol + NAD(+) + n H(+)(out). It catalyses the reaction a plastoquinone + NADPH + (n+1) H(+)(in) = a plastoquinol + NADP(+) + n H(+)(out). Functionally, NDH-1 shuttles electrons from an unknown electron donor, via FMN and iron-sulfur (Fe-S) centers, to quinones in the respiratory and/or the photosynthetic chain. The immediate electron acceptor for the enzyme in this species is believed to be plastoquinone. Couples the redox reaction to proton translocation, and thus conserves the redox energy in a proton gradient. The sequence is that of NAD(P)H-quinone oxidoreductase subunit 1 from Thermosynechococcus vestitus (strain NIES-2133 / IAM M-273 / BP-1).